A 444-amino-acid polypeptide reads, in one-letter code: Zinc protease PqqE (444 aa).

Positions 1 to 28 (MKHFSVKRLLGLSSVLLVTLGASMHAQS) are cleaved as a signal peptide. Position 78 (histidine 78) interacts with Zn(2+). The active-site Proton acceptor is glutamate 81. 2 residues coordinate Zn(2+): histidine 82 and glutamate 158.

This sequence belongs to the peptidase M16 family. Zn(2+) serves as cofactor.

Its subcellular location is the secreted. Can function alone, but full activity requires the presence of the non-peptidase homolog YmxG. Functionally, virulence factor that cleaves the cytoplasmic domain of the human junctional adhesion molecule A (JAM-A), compromising gastric epithelial barrier function and cell-cell adhesion. Cleavage of JAM-A occurs after Ala-285 or, to a lesser extent, before Ala-285. The protein is Zinc protease PqqE of Helicobacter pylori (strain ATCC 700392 / 26695) (Campylobacter pylori).